The chain runs to 198 residues: Proteasome subunit beta 1 (198 aa).

A propeptide spans 1–8 (MSMYMPGA) (removed in mature form; by autocatalysis). Thr-9 (nucleophile) is an active-site residue.

Belongs to the peptidase T1B family. As to quaternary structure, the 20S proteasome core is composed of 14 alpha and 14 beta subunits that assemble into four stacked heptameric rings, resulting in a barrel-shaped structure. The two inner rings, each composed of seven catalytic beta subunits, are sandwiched by two outer rings, each composed of seven alpha subunits. The catalytic chamber with the active sites is on the inside of the barrel. Has a gated structure, the ends of the cylinder being occluded by the N-termini of the alpha-subunits. Is capped at one or both ends by the proteasome regulatory ATPase, PAN.

Its subcellular location is the cytoplasm. It catalyses the reaction Cleavage of peptide bonds with very broad specificity.. The formation of the proteasomal ATPase PAN-20S proteasome complex, via the docking of the C-termini of PAN into the intersubunit pockets in the alpha-rings, triggers opening of the gate for substrate entry. Interconversion between the open-gate and close-gate conformations leads to a dynamic regulation of the 20S proteasome proteolysis activity. In terms of biological role, component of the proteasome core, a large protease complex with broad specificity involved in protein degradation. This is Proteasome subunit beta 1 from Nitrosopumilus maritimus (strain SCM1).